The chain runs to 291 residues: Small ribosomal subunit biogenesis GTPase RsgA (291 aa).

Residues 63-221 (ENELKRPPVS…IADTPGFSAL (159 aa)) enclose the CP-type G domain. GTP contacts are provided by residues 112–115 (TKKD) and 164–172 (GQSGVGKST). Cys-245, Cys-250, His-252, and Cys-258 together coordinate Zn(2+).

Belongs to the TRAFAC class YlqF/YawG GTPase family. RsgA subfamily. In terms of assembly, monomer. Associates with 30S ribosomal subunit, binds 16S rRNA. Zn(2+) serves as cofactor.

The protein localises to the cytoplasm. Functionally, one of several proteins that assist in the late maturation steps of the functional core of the 30S ribosomal subunit. Helps release RbfA from mature subunits. May play a role in the assembly of ribosomal proteins into the subunit. Circularly permuted GTPase that catalyzes slow GTP hydrolysis, GTPase activity is stimulated by the 30S ribosomal subunit. This Staphylococcus aureus (strain COL) protein is Small ribosomal subunit biogenesis GTPase RsgA.